Here is a 259-residue protein sequence, read N- to C-terminus: Factor V activator (259 aa).

The signal sequence occupies residues Met-1–Ala-18. The propeptide occupies Gln-19 to Leu-24. The Peptidase S1 domain maps to Val-25–Ala-251. Cystine bridges form between Cys-31–Cys-165, Cys-52–Cys-68, Cys-100–Cys-258, Cys-144–Cys-212, Cys-176–Cys-191, and Cys-202–Cys-227. Residues His-67 and Asp-112 each act as charge relay system in the active site. Ser-206 (charge relay system) is an active-site residue. An N-linked (GlcNAc...) asparagine glycan is attached at Asn-253.

Belongs to the peptidase S1 family. Snake venom subfamily. As to quaternary structure, monomer. Post-translationally, N-glycosylated. Contains 4.4% of hexoses, 4.4% of hexosamines and 3.1% of sialic acids. As to expression, expressed by the venom gland.

It is found in the secreted. The enzyme catalyses Fully activates human clotting factor V by a single cleavage at the 1545-Trp-Tyr-Leu-Arg-|-Ser-Asn-Asn-Gly-1552 bond. Cattle, but not rabbit, factor V is cleaved, and no other proteins of the clotting system are attacked. Esterase activity is observed on Bz-Arg-OEt and Tos-Arg-OMe, and amidase activity on Phe-pipecolyl-Arg-NHPhNO2.. Its activity is regulated as follows. Inhibited by D-Phe-Pro-Arg-chloromethyl ketone (FPRCK) (98%), PMSF (93%), benzamidine (67%), and diisopropylfluorophosphate (DFP). Is not inhibited by BPTI, antithrombin and EDTA. Venom serine protease that converts factor V (F5) to the active form Va in the presence of calcium ions and phospholipids. It cleaves the Arg(1545)-Ser(1546) linkage in the human factor V molecule. Has hydrolytic activities against BAEE (1.2 U/mg), TAME, and Pro-Phe-Arg-MCA (4.9 U/mg). Shows coagulant activity. In Macrovipera lebetinus (Levantine viper), this protein is Factor V activator.